Reading from the N-terminus, the 257-residue chain is Snake venom serine protease salmonase (257 aa).

Positions 1-18 (MVLIRVLVNFLILQLSYA) are cleaved as a signal peptide. Positions 19–24 (QKSSEL) are excised as a propeptide. Residues 25-248 (VIGGDECNIN…YIDWIQSIIA (224 aa)) form the Peptidase S1 domain. Disulfide bonds link cysteine 31/cysteine 162, cysteine 49/cysteine 65, cysteine 141/cysteine 209, cysteine 173/cysteine 188, and cysteine 199/cysteine 224. Histidine 64 serves as the catalytic Charge relay system. Asparagine 78 carries N-linked (GlcNAc...) asparagine glycosylation. Aspartate 109 serves as the catalytic Charge relay system. The active-site Charge relay system is the serine 203.

The protein belongs to the peptidase S1 family. Snake venom subfamily. In terms of assembly, monomer. Expressed by the venom gland.

The protein resides in the secreted. In terms of biological role, snake venom serine protease that may act in the hemostasis system of the prey. The chain is Snake venom serine protease salmonase from Gloydius brevicauda (Korean slamosa snake).